A 1035-amino-acid chain; its full sequence is DNA polymerase I B, mitochondrial (1035 aa).

A mitochondrion-targeting transit peptide spans 1–42 (MAVAPPLPPAPARLLRRWQGSSPWLSSSFGRTRYFSRPAFAA). A disordered region spans residues 100 to 124 (TNGTTPLRVGNLRHDPSEDIRSSNY). Basic and acidic residues predominate over residues 111–120 (LRHDPSEDIR). One can recognise a 3'-5' exonuclease domain in the interval 317–478 (FGNGKTCIWV…LYESLKNKLE (162 aa)). The segment at 699 to 1032 (HAIAALCEVF…VDAKYAKSWY (334 aa)) is polymerase.

This sequence belongs to the DNA polymerase type-A family.

Its subcellular location is the mitochondrion. It catalyses the reaction DNA(n) + a 2'-deoxyribonucleoside 5'-triphosphate = DNA(n+1) + diphosphate. With respect to regulation, not inhibited by aphidicolin. In terms of biological role, in addition to polymerase activity, this DNA polymerase exhibits 5'-3' exonuclease activity. May be required for DNA replication and accumulation in mitochondria. This Oryza sativa subsp. japonica (Rice) protein is DNA polymerase I B, mitochondrial.